Consider the following 425-residue polypeptide: Cyclin-K (425 aa).

Residues 262–425 are disordered; it reads GKQPIPQQPP…RRYLDDDRNL (164 aa). The span at 366–377 shows a compositional bias: low complexity; it reads AEPAAASELDPA. The span at 379–399 shows a compositional bias: pro residues; sequence GPAPPLPHGAPPPLPHRPPPT.

The protein belongs to the cyclin family.

It localises to the nucleus. Functionally, regulatory subunit of cyclin-dependent kinases that mediates activation of target kinases. Plays a role in transcriptional regulation via its role in regulating the phosphorylation of the C-terminal domain (CTD) of the large subunit of RNA polymerase II (POLR2A). The polypeptide is Cyclin-K (ccnk) (Danio rerio (Zebrafish)).